The chain runs to 513 residues: ATP synthase subunit alpha (513 aa).

Residue G169–T176 coordinates ATP.

The protein belongs to the ATPase alpha/beta chains family. F-type ATPases have 2 components, CF(1) - the catalytic core - and CF(0) - the membrane proton channel. CF(1) has five subunits: alpha(3), beta(3), gamma(1), delta(1), epsilon(1). CF(0) has three main subunits: a(1), b(2) and c(9-12). The alpha and beta chains form an alternating ring which encloses part of the gamma chain. CF(1) is attached to CF(0) by a central stalk formed by the gamma and epsilon chains, while a peripheral stalk is formed by the delta and b chains.

The protein resides in the cell inner membrane. The catalysed reaction is ATP + H2O + 4 H(+)(in) = ADP + phosphate + 5 H(+)(out). In terms of biological role, produces ATP from ADP in the presence of a proton gradient across the membrane. The alpha chain is a regulatory subunit. In Edwardsiella ictaluri (strain 93-146), this protein is ATP synthase subunit alpha.